Reading from the N-terminus, the 1434-residue chain is Probable ATP-dependent RNA helicase spindle-E (1434 aa).

A Helicase ATP-binding domain is found at 126 to 295 (INAINENPVV…FANESSAPPV (170 aa)). 139–146 (GETGCGKT) contributes to the ATP binding site. Residues 241–244 (DEVH) carry the DEAH box motif. The region spanning 356–527 (TGKSYNQSLR…NCVLKAKELK (172 aa)) is the Helicase C-terminal domain. Positions 936 to 999 (AGAITKGLML…RLMSQDLLRH (64 aa)) constitute a Tudor domain.

Belongs to the DEAD box helicase family. DEAH subfamily.

It localises to the cytoplasm. It catalyses the reaction ATP + H2O = ADP + phosphate + H(+). Functionally, probable ATP-binding RNA helicase which plays a central role during spermatogenesis and oogenesis by repressing transposable elements and preventing their mobilization, which is essential for the germline integrity. Acts via the piRNA metabolic process, which mediates the repression of transposable elements during meiosis by forming complexes composed of piRNAs and Piwi and govern the methylation and subsequent repression of transposons. Involved in the repression of LTR retrotransposon copia. Also involved in telomere regulation by repressing specialized telomeric retroelements HeT-A, TAHRE, and TART; Drosophila telomeres being maintained by transposition of specialized telomeric retroelements. Involved in telomeric trans-silencing, a repression mechanism by which a transposon or a transgene inserted in subtelomeric heterochromatin has the capacity to repress in trans in the female germline, a homologous transposon, or transgene located in euchromatin. Involved in the repression of testis-expressed Stellate genes by the homologous Su(Ste) repeats. Required for anteroposterior and dorsoventral axis formation during oogenesis. The chain is Probable ATP-dependent RNA helicase spindle-E (spn-E) from Drosophila persimilis (Fruit fly).